The chain runs to 208 residues: Ribonuclease HII (208 aa).

Positions 13-202 (DLVAGVDEVG…VRQAYEAREA (190 aa)) constitute an RNase H type-2 domain. A divalent metal cation is bound by residues D19, E20, and D111.

It belongs to the RNase HII family. The cofactor is Mn(2+). It depends on Mg(2+) as a cofactor.

It is found in the cytoplasm. The enzyme catalyses Endonucleolytic cleavage to 5'-phosphomonoester.. Functionally, endonuclease that specifically degrades the RNA of RNA-DNA hybrids. The sequence is that of Ribonuclease HII from Pseudomonas fluorescens (strain ATCC BAA-477 / NRRL B-23932 / Pf-5).